The following is a 430-amino-acid chain: Adenylosuccinate synthetase (430 aa).

GTP contacts are provided by residues Gly-12–Lys-18 and Gly-40–Thr-42. The Proton acceptor role is filled by Asp-13. Mg(2+)-binding residues include Asp-13 and Gly-40. Residues Asp-13–Lys-16, Asn-38–His-41, Thr-128, Arg-142, Gln-223, Thr-238, and Arg-302 each bind IMP. His-41 functions as the Proton donor in the catalytic mechanism. Residue Thr-298–Arg-304 participates in substrate binding. Residues Arg-304, Ser-330–Asp-332, and Ser-412–Gly-414 contribute to the GTP site.

It belongs to the adenylosuccinate synthetase family. In terms of assembly, homodimer. The cofactor is Mg(2+).

The protein localises to the cytoplasm. The catalysed reaction is IMP + L-aspartate + GTP = N(6)-(1,2-dicarboxyethyl)-AMP + GDP + phosphate + 2 H(+). It participates in purine metabolism; AMP biosynthesis via de novo pathway; AMP from IMP: step 1/2. Plays an important role in the de novo pathway of purine nucleotide biosynthesis. Catalyzes the first committed step in the biosynthesis of AMP from IMP. The chain is Adenylosuccinate synthetase from Streptococcus pyogenes serotype M12 (strain MGAS9429).